A 286-amino-acid chain; its full sequence is 4-hydroxybenzoate octaprenyltransferase (286 aa).

Transmembrane regions (helical) follow at residues 19–39, 42–62, 92–112, 115–135, 137–157, 161–181, 206–226, 233–253, and 264–284; these read AGWLLLLWPTLSALWVASHGF, WHLLTVFTLGTILMRSAGCCV, ALVLGAVLALLAFGLVLTTNA, IAWSFAALAVTLAYPFAKRYV, MPQAVLGVAFSFGIPMAFAAV, VPLLAWVLLLGNLCWVIAYDT, FDVAGVMLSYLVYLSVWALAL, AIYWMAIGLAGLQALWHGWLI, and AFRLNHWLGFTVFAGIALSYL.

This sequence belongs to the UbiA prenyltransferase family. The cofactor is Mg(2+).

The protein resides in the cell inner membrane. The catalysed reaction is all-trans-octaprenyl diphosphate + 4-hydroxybenzoate = 4-hydroxy-3-(all-trans-octaprenyl)benzoate + diphosphate. It participates in cofactor biosynthesis; ubiquinone biosynthesis. Its function is as follows. Catalyzes the prenylation of para-hydroxybenzoate (PHB) with an all-trans polyprenyl group. Mediates the second step in the final reaction sequence of ubiquinone-8 (UQ-8) biosynthesis, which is the condensation of the polyisoprenoid side chain with PHB, generating the first membrane-bound Q intermediate 3-octaprenyl-4-hydroxybenzoate. In Polaromonas sp. (strain JS666 / ATCC BAA-500), this protein is 4-hydroxybenzoate octaprenyltransferase.